A 170-amino-acid chain; its full sequence is Probable T4-type lysozyme 2 (170 aa).

Glutamate 13 (proton donor) is an active-site residue. Aspartate 22 functions as the Nucleophile in the catalytic mechanism.

This sequence belongs to the glycosyl hydrolase 24 family.

The catalysed reaction is Hydrolysis of (1-&gt;4)-beta-linkages between N-acetylmuramic acid and N-acetyl-D-glucosamine residues in a peptidoglycan and between N-acetyl-D-glucosamine residues in chitodextrins.. This Dictyostelium discoideum (Social amoeba) protein is Probable T4-type lysozyme 2.